We begin with the raw amino-acid sequence, 421 residues long: Gamma-glutamyl phosphate reductase (421 aa).

The protein belongs to the gamma-glutamyl phosphate reductase family.

It is found in the cytoplasm. It catalyses the reaction L-glutamate 5-semialdehyde + phosphate + NADP(+) = L-glutamyl 5-phosphate + NADPH + H(+). The protein operates within amino-acid biosynthesis; L-proline biosynthesis; L-glutamate 5-semialdehyde from L-glutamate: step 2/2. Functionally, catalyzes the NADPH-dependent reduction of L-glutamate 5-phosphate into L-glutamate 5-semialdehyde and phosphate. The product spontaneously undergoes cyclization to form 1-pyrroline-5-carboxylate. The polypeptide is Gamma-glutamyl phosphate reductase (Acinetobacter baumannii (strain ACICU)).